The sequence spans 1160 residues: ATP-dependent helicase/deoxyribonuclease subunit B (1160 aa).

This sequence belongs to the helicase family. AddB/RexB type 2 subfamily. As to quaternary structure, heterodimer of AddA and RexB. The cofactor is Mg(2+).

Its function is as follows. The heterodimer acts as both an ATP-dependent DNA helicase and an ATP-dependent, dual-direction single-stranded exonuclease. Recognizes the chi site generating a DNA molecule suitable for the initiation of homologous recombination. This subunit has 5' -&gt; 3' nuclease activity but not helicase activity. In Lactobacillus helveticus (strain DPC 4571), this protein is ATP-dependent helicase/deoxyribonuclease subunit B.